Here is a 433-residue protein sequence, read N- to C-terminus: Probable M18 family aminopeptidase 2 (433 aa).

Zn(2+)-binding residues include histidine 84, histidine 161, and histidine 409.

It belongs to the peptidase M18 family. Zn(2+) serves as cofactor.

This Clostridium novyi (strain NT) protein is Probable M18 family aminopeptidase 2.